The following is a 633-amino-acid chain: Phosphomethylpyrimidine synthase (633 aa).

Substrate-binding positions include asparagine 245, methionine 274, tyrosine 303, histidine 339, serine 359–glycine 361, aspartate 400–arginine 403, and glutamate 439. Histidine 443 provides a ligand contact to Zn(2+). Tyrosine 466 is a substrate binding site. Histidine 507 serves as a coordination point for Zn(2+). Positions 587, 590, and 595 each coordinate [4Fe-4S] cluster.

The protein belongs to the ThiC family. As to quaternary structure, homodimer. It depends on [4Fe-4S] cluster as a cofactor.

It catalyses the reaction 5-amino-1-(5-phospho-beta-D-ribosyl)imidazole + S-adenosyl-L-methionine = 4-amino-2-methyl-5-(phosphooxymethyl)pyrimidine + CO + 5'-deoxyadenosine + formate + L-methionine + 3 H(+). It functions in the pathway cofactor biosynthesis; thiamine diphosphate biosynthesis. In terms of biological role, catalyzes the synthesis of the hydroxymethylpyrimidine phosphate (HMP-P) moiety of thiamine from aminoimidazole ribotide (AIR) in a radical S-adenosyl-L-methionine (SAM)-dependent reaction. The protein is Phosphomethylpyrimidine synthase of Neisseria meningitidis serogroup A / serotype 4A (strain DSM 15465 / Z2491).